Consider the following 384-residue polypeptide: Lipid-A-disaccharide synthase (384 aa).

This sequence belongs to the LpxB family.

It catalyses the reaction a lipid X + a UDP-2-N,3-O-bis[(3R)-3-hydroxyacyl]-alpha-D-glucosamine = a lipid A disaccharide + UDP + H(+). The protein operates within bacterial outer membrane biogenesis; LPS lipid A biosynthesis. Functionally, condensation of UDP-2,3-diacylglucosamine and 2,3-diacylglucosamine-1-phosphate to form lipid A disaccharide, a precursor of lipid A, a phosphorylated glycolipid that anchors the lipopolysaccharide to the outer membrane of the cell. This is Lipid-A-disaccharide synthase from Cellvibrio japonicus (strain Ueda107) (Pseudomonas fluorescens subsp. cellulosa).